The primary structure comprises 234 residues: Peptidyl-tRNA hydrolase (234 aa).

Y14 lines the tRNA pocket. Catalysis depends on H19, which acts as the Proton acceptor. Residues F64, N66, and N112 each contribute to the tRNA site. Positions 187–234 are disordered; the sequence is TGTKADEEKPKPAKSHIHQARNGVQPKKLPETGPMAEMLKKMFGPKKD.

Belongs to the PTH family. As to quaternary structure, monomer.

It is found in the cytoplasm. The enzyme catalyses an N-acyl-L-alpha-aminoacyl-tRNA + H2O = an N-acyl-L-amino acid + a tRNA + H(+). In terms of biological role, hydrolyzes ribosome-free peptidyl-tRNAs (with 1 or more amino acids incorporated), which drop off the ribosome during protein synthesis, or as a result of ribosome stalling. Its function is as follows. Catalyzes the release of premature peptidyl moieties from peptidyl-tRNA molecules trapped in stalled 50S ribosomal subunits, and thus maintains levels of free tRNAs and 50S ribosomes. This Allorhizobium ampelinum (strain ATCC BAA-846 / DSM 112012 / S4) (Agrobacterium vitis (strain S4)) protein is Peptidyl-tRNA hydrolase.